The following is a 267-amino-acid chain: Tryptophan synthase alpha chain (267 aa).

Residues Glu39 and Asp50 each act as proton acceptor in the active site.

The protein belongs to the TrpA family. As to quaternary structure, tetramer of two alpha and two beta chains.

The catalysed reaction is (1S,2R)-1-C-(indol-3-yl)glycerol 3-phosphate + L-serine = D-glyceraldehyde 3-phosphate + L-tryptophan + H2O. The protein operates within amino-acid biosynthesis; L-tryptophan biosynthesis; L-tryptophan from chorismate: step 5/5. Functionally, the alpha subunit is responsible for the aldol cleavage of indoleglycerol phosphate to indole and glyceraldehyde 3-phosphate. This is Tryptophan synthase alpha chain from Helicobacter hepaticus (strain ATCC 51449 / 3B1).